Here is a 245-residue protein sequence, read N- to C-terminus: MKNIIVIKLGGIAIENLNDAFIQQINAWHLENKKIIIVHGGGQVISNLLTKNNHSTIKIDGMRVTAKNDLPIIYDALINIVGHQLLERLKESNLEFFQFKEKIKELVSAEFLNKNIYGYVGKVKEINTMLLEKMLSRDIIPIITSLGVNEQGEYLNVNADHLATAIAKKLKVEKLVYMTDVPGVIEKDKTLATLTINEAKTKIENKIITGGMIPKIESAIQTLESGVESILIANNLQKGTIIRGD.

Residues 41–42 (GG), Arg63, and Asn156 each bind substrate.

Belongs to the acetylglutamate kinase family. ArgB subfamily.

The protein resides in the cytoplasm. It carries out the reaction N-acetyl-L-glutamate + ATP = N-acetyl-L-glutamyl 5-phosphate + ADP. It functions in the pathway amino-acid biosynthesis; L-arginine biosynthesis; N(2)-acetyl-L-ornithine from L-glutamate: step 2/4. In terms of biological role, catalyzes the ATP-dependent phosphorylation of N-acetyl-L-glutamate. This is Acetylglutamate kinase from Staphylococcus epidermidis (strain ATCC 35984 / DSM 28319 / BCRC 17069 / CCUG 31568 / BM 3577 / RP62A).